Reading from the N-terminus, the 338-residue chain is Putative peptide import ATP-binding protein BOV_A0348 (338 aa).

In terms of domain architecture, ABC transporter spans 10 to 263 (KGLRTVFRTR…PRHPYTMGLL (254 aa)). 43–50 (GESGSGKS) is a binding site for ATP.

This sequence belongs to the ABC transporter superfamily. As to quaternary structure, the complex is composed of two ATP-binding proteins (BOV_A0347 and BOV_A0348), two transmembrane proteins (BOV_A0350 and BOV_A0351) and a solute-binding protein (BOV_A0352).

Its subcellular location is the cell inner membrane. In terms of biological role, probably part of an ABC transporter complex that could be involved in peptide import. Probably responsible for energy coupling to the transport system. In Brucella ovis (strain ATCC 25840 / 63/290 / NCTC 10512), this protein is Putative peptide import ATP-binding protein BOV_A0348.